We begin with the raw amino-acid sequence, 270 residues long: tRNA 2-(methylsulfanyl)-N(6)-isopentenyladenosine(37) hydroxylase (270 aa).

Fe cation contacts are provided by Glu59, Glu137, His140, Glu190, Glu219, and His222.

This sequence belongs to the MiaE family. In terms of assembly, monomer. The cofactor is Fe cation.

It carries out the reaction 2-methylsulfanyl-N(6)-dimethylallyladenosine(37) in tRNA + AH2 + O2 = N(6)-[(2E)-4-hydroxy-3-methylbut-2-en-1-yl]-2-(methylsulfanyl)adenosine(37) in tRNA + A + H2O. Its pathway is tRNA modification; 2-methylthio-N-6-(cis-hydroxy)isopentenyl adenosine-tRNA biosynthesis. Involved in specific tRNA modification. Catalyzes the oxygen-dependent hydroxylation of 2-methylthio-N-6-isopentenyl adenosine (ms2i6A) to produce 2-methylthio-N-6-(cis-hydroxy)isopentenyl adenosine (ms2io6A) at position 37 in tRNAs. Can also use N6-(dimethylallyl)adenosine (i6A) as substrate, with lower efficiency. The presence of the hydroxyl group on the tRNA may regulate the ability of S.typhimurium to grow on the citric acid cycle (CAC) intermediates succinate, fumarate and malate. In Salmonella typhimurium (strain LT2 / SGSC1412 / ATCC 700720), this protein is tRNA 2-(methylsulfanyl)-N(6)-isopentenyladenosine(37) hydroxylase.